The following is a 1574-amino-acid chain: Pentafunctional AROM polypeptide (1574 aa).

The tract at residues 1 to 384 (MSCSNNTEPT…HEPRATTVED (384 aa)) is 3-dehydroquinate synthase. NAD(+)-binding positions include 49–51 (DTN), 85–88 (EISK), 116–118 (GGV), and Asp121. Arg132 contributes to the 7-phospho-2-dehydro-3-deoxy-D-arabino-heptonate binding site. An NAD(+)-binding site is contributed by 141–142 (TT). The 7-phospho-2-dehydro-3-deoxy-D-arabino-heptonate site is built by Asp148 and Lys154. Lys163 lines the NAD(+) pocket. Asn164 contacts 7-phospho-2-dehydro-3-deoxy-D-arabino-heptonate. NAD(+) contacts are provided by residues 181-184 (FLET) and Asn192. Glu196 contributes to the Zn(2+) binding site. 7-phospho-2-dehydro-3-deoxy-D-arabino-heptonate is bound by residues 196–199 (EVIK) and Lys250. The active-site Proton acceptor; for 3-dehydroquinate synthase activity is Glu260. 7-phospho-2-dehydro-3-deoxy-D-arabino-heptonate contacts are provided by residues 264 to 268 (RNLLN) and His271. His271 provides a ligand contact to Zn(2+). His275 acts as the Proton acceptor; for 3-dehydroquinate synthase activity in catalysis. Residues His287 and Lys356 each coordinate 7-phospho-2-dehydro-3-deoxy-D-arabino-heptonate. His287 serves as a coordination point for Zn(2+). The segment at 397–837 (ITPGVSTKLA…WDTLSQSFGL (441 aa)) is EPSP synthase. Cys819 (for EPSP synthase activity) is an active-site residue. The interval 858-1052 (TRSVFIVGMR…TAKEQSFFVS (195 aa)) is shikimate kinase. 865-872 (GMRGAGKT) is an ATP binding site. Positions 1053 to 1266 (LTVPSVDSAV…AAPGQLSAAE (214 aa)) are 3-dehydroquinase. The Proton acceptor; for 3-dehydroquinate dehydratase activity role is filled by His1169. The Schiff-base intermediate with substrate; for 3-dehydroquinate dehydratase activity role is filled by Lys1197. The segment at 1279 to 1574 (AQSFHLFGKP…NGDEIPTSTD (296 aa)) is shikimate dehydrogenase.

It in the N-terminal section; belongs to the sugar phosphate cyclases superfamily. Dehydroquinate synthase family. In the 2nd section; belongs to the EPSP synthase family. The protein in the 3rd section; belongs to the shikimate kinase family. This sequence in the 4th section; belongs to the type-I 3-dehydroquinase family. It in the C-terminal section; belongs to the shikimate dehydrogenase family. Homodimer. Zn(2+) is required as a cofactor.

Its subcellular location is the cytoplasm. It catalyses the reaction 7-phospho-2-dehydro-3-deoxy-D-arabino-heptonate = 3-dehydroquinate + phosphate. The enzyme catalyses 3-dehydroquinate = 3-dehydroshikimate + H2O. The catalysed reaction is shikimate + NADP(+) = 3-dehydroshikimate + NADPH + H(+). It carries out the reaction shikimate + ATP = 3-phosphoshikimate + ADP + H(+). It catalyses the reaction 3-phosphoshikimate + phosphoenolpyruvate = 5-O-(1-carboxyvinyl)-3-phosphoshikimate + phosphate. The protein operates within metabolic intermediate biosynthesis; chorismate biosynthesis; chorismate from D-erythrose 4-phosphate and phosphoenolpyruvate: step 2/7. It participates in metabolic intermediate biosynthesis; chorismate biosynthesis; chorismate from D-erythrose 4-phosphate and phosphoenolpyruvate: step 3/7. It functions in the pathway metabolic intermediate biosynthesis; chorismate biosynthesis; chorismate from D-erythrose 4-phosphate and phosphoenolpyruvate: step 4/7. Its pathway is metabolic intermediate biosynthesis; chorismate biosynthesis; chorismate from D-erythrose 4-phosphate and phosphoenolpyruvate: step 5/7. The protein operates within metabolic intermediate biosynthesis; chorismate biosynthesis; chorismate from D-erythrose 4-phosphate and phosphoenolpyruvate: step 6/7. Functionally, the AROM polypeptide catalyzes 5 consecutive enzymatic reactions in prechorismate polyaromatic amino acid biosynthesis. The polypeptide is Pentafunctional AROM polypeptide (Verticillium alfalfae (strain VaMs.102 / ATCC MYA-4576 / FGSC 10136) (Verticillium wilt of alfalfa)).